The chain runs to 166 residues: DNA replication protein 17 (166 aa).

Belongs to the phi29likevirus protein p56 family. As to quaternary structure, homodimer. Interacts with the histone-like protein p6; this interaction optimizes the binding of protein p6 at the viral DNA ends, thus favoring the initiation of replication.

Involved in the replication of viral DNA. It is required at the very beginning of the virus amplification, conditions in which a low number of viral DNA molecules enter the host cell, possibly to recruit the limiting amount of initiation factors at the replication origins. Once the infection process is established and the other replication proteins reach optimal concentration, it becomes dispensable. Optimizes the binding of protein p6 at the viral DNA ends, thus favoring the initiation of replication. In Bacillus subtilis (Bacteriophage phi-29), this protein is DNA replication protein 17 (17).